The sequence spans 400 residues: Putative F-box protein At5g41510 (400 aa).

The region spanning Ala2–Val47 is the F-box domain.

In Arabidopsis thaliana (Mouse-ear cress), this protein is Putative F-box protein At5g41510.